Here is a 60-residue protein sequence, read N- to C-terminus: Cytotoxin 8 (60 aa).

4 disulfides stabilise this stretch: cysteine 3/cysteine 21, cysteine 14/cysteine 38, cysteine 42/cysteine 53, and cysteine 54/cysteine 59.

It belongs to the three-finger toxin family. Short-chain subfamily. Type IA cytotoxin sub-subfamily. Monomer in solution; Homodimer and oligomer in the presence of negatively charged lipids forming a pore with a size ranging between 20 and 30 Angstroms. As to expression, expressed by the venom gland.

The protein localises to the secreted. Its subcellular location is the target cell membrane. In terms of biological role, shows cytolytic activity on many different cells by forming pore in lipid membranes. In vivo, increases heart rate or kills the animal by cardiac arrest. In addition, it binds to heparin with high affinity, interacts with Kv channel-interacting protein 1 (KCNIP1) in a calcium-independent manner, and binds to integrin alpha-V/beta-3 (ITGAV/ITGB3) with moderate affinity. Has hemolytic activity towards human erythrocytes (EC(50)=0.074 uM) and cytolytic activity towards various cell lines. The sequence is that of Cytotoxin 8 from Naja naja (Indian cobra).